The chain runs to 319 residues: HTH-type transcriptional regulator YidZ (319 aa).

One can recognise an HTH lysR-type domain in the interval 8–65 (LDLNLLLCLQLLMQERSVTKAAKRMNVTPSAVSKSLAKLRAWFDDPLFVNTPLGLAPT). Positions 25–44 (VTKAAKRMNVTPSAVSKSLA) form a DNA-binding region, H-T-H motif.

This sequence belongs to the LysR transcriptional regulatory family.

Involved in anaerobic NO protection. This Salmonella heidelberg (strain SL476) protein is HTH-type transcriptional regulator YidZ.